A 298-amino-acid chain; its full sequence is 4-hydroxy-tetrahydrodipicolinate synthase (298 aa).

Threonine 48 is a binding site for pyruvate. Tyrosine 137 functions as the Proton donor/acceptor in the catalytic mechanism. The active-site Schiff-base intermediate with substrate is the lysine 166. Residue isoleucine 207 coordinates pyruvate.

This sequence belongs to the DapA family. Homotetramer; dimer of dimers.

Its subcellular location is the cytoplasm. The enzyme catalyses L-aspartate 4-semialdehyde + pyruvate = (2S,4S)-4-hydroxy-2,3,4,5-tetrahydrodipicolinate + H2O + H(+). It functions in the pathway amino-acid biosynthesis; L-lysine biosynthesis via DAP pathway; (S)-tetrahydrodipicolinate from L-aspartate: step 3/4. In terms of biological role, catalyzes the condensation of (S)-aspartate-beta-semialdehyde [(S)-ASA] and pyruvate to 4-hydroxy-tetrahydrodipicolinate (HTPA). The sequence is that of 4-hydroxy-tetrahydrodipicolinate synthase from Campylobacter hominis (strain ATCC BAA-381 / DSM 21671 / CCUG 45161 / LMG 19568 / NCTC 13146 / CH001A).